We begin with the raw amino-acid sequence, 71 residues long: Large ribosomal subunit protein bL31 (71 aa).

Residues C16, C18, C37, and C40 each contribute to the Zn(2+) site.

The protein belongs to the bacterial ribosomal protein bL31 family. Type A subfamily. In terms of assembly, part of the 50S ribosomal subunit. Requires Zn(2+) as cofactor.

Binds the 23S rRNA. The chain is Large ribosomal subunit protein bL31 from Aeromonas salmonicida (strain A449).